The chain runs to 1146 residues: Integrin alpha-PS1 (1146 aa).

The signal sequence occupies residues 1-30 (MLELPFTTIRPNCRLRQNLGILIILQCVLT). At 31 to 1085 (CYNFNLEQRL…NQQRDTSIPW (1055 aa)) the chain is on the extracellular side. FG-GAP repeat units follow at residues 38–105 (QRLP…FDDC), 121–186 (LSPP…FEEV), 193–245 (RPVQ…YLQR), 254–303 (HSDL…KSTD), 304–366 (NPIP…TLPM), 367–422 (KYTL…GLNS), and 432–494 (ELGG…RKEL). Residues Asn-68, Asn-86, and Asn-147 are each glycosylated (N-linked (GlcNAc...) asparagine). Residues Asn-470, Asn-511, Asn-657, Asn-680, Asn-711, Asn-718, Asn-761, and Asn-928 are each glycosylated (N-linked (GlcNAc...) asparagine). The segment at 938-958 (YYSSSHRDDHSDDTQSNRNRV) is disordered. Residues 942 to 952 (SHRDDHSDDTQ) show a composition bias toward basic and acidic residues. A glycan (N-linked (GlcNAc...) asparagine) is linked at Asn-1027. The chain crosses the membrane as a helical span at residues 1086 to 1106 (LIIILGIVGGLLLLALVTYVL). Residues 1107 to 1146 (WKVGFFKRIRPTDPTLSGNLEKMNEEKPFLAPSKNTHHVF) are Cytoplasmic-facing.

This sequence belongs to the integrin alpha chain family. In terms of assembly, heterodimer of an alpha and a beta subunit. The alpha subunit is composed of a heavy and a light chain linked by a disulfide bond. Alpha-PS1 associates with beta-PS. In terms of tissue distribution, expressed in follicle cells (at protein level). At syncytial blastoderm stage, expressed in the ectoderm but not in the mesodermal precursors. At embryonic stage 7, expressed in dorsal and ventrolateral ectoderm and in some yolk nuclei. At late stage 10, expression is homogeneous in the ectoderm and is particularly abundant in the anterior and posterior midgut primordia. At stage 11, strongly expressed in a metameric pattern in the ectoderm, in the proctodeum and in the posterior midgut primordium. At stage 12, accumulates at the segment boundaries that start to become morphologically visible, similar expression pattern is observed in the central nervous system. In third larval instar wing imaginal disk, strongly expressed in the dorsal compartment, in the adepithelial cells and in patches on the peripodial membrane covering the imaginal disk to the outside.

The protein resides in the apical cell membrane. It is found in the lateral cell membrane. Its subcellular location is the basal cell membrane. Its function is as follows. Integrin alpha-PS1/beta-PS is a receptor for laminin. This is Integrin alpha-PS1 (mew) from Drosophila melanogaster (Fruit fly).